We begin with the raw amino-acid sequence, 338 residues long: Ketol-acid reductoisomerase (NADP(+)) (338 aa).

Positions 1 to 181 constitute a KARI N-terminal Rossmann domain; it reads MNVFYDKDAD…GGGRAGIIET (181 aa). NADP(+) contacts are provided by residues 24–27, arginine 47, and serine 52; that span reads YGSQ. Histidine 107 is a catalytic residue. Residue glycine 133 participates in NADP(+) binding. A KARI C-terminal knotted domain is found at 182 to 327; sequence NFREETETDL…AKLRAMMPWI (146 aa). Mg(2+) is bound by residues aspartate 190, glutamate 194, glutamate 226, and glutamate 230. Serine 251 serves as a coordination point for substrate.

Belongs to the ketol-acid reductoisomerase family. It depends on Mg(2+) as a cofactor.

It catalyses the reaction (2R)-2,3-dihydroxy-3-methylbutanoate + NADP(+) = (2S)-2-acetolactate + NADPH + H(+). It carries out the reaction (2R,3R)-2,3-dihydroxy-3-methylpentanoate + NADP(+) = (S)-2-ethyl-2-hydroxy-3-oxobutanoate + NADPH + H(+). The protein operates within amino-acid biosynthesis; L-isoleucine biosynthesis; L-isoleucine from 2-oxobutanoate: step 2/4. It functions in the pathway amino-acid biosynthesis; L-valine biosynthesis; L-valine from pyruvate: step 2/4. Its function is as follows. Involved in the biosynthesis of branched-chain amino acids (BCAA). Catalyzes an alkyl-migration followed by a ketol-acid reduction of (S)-2-acetolactate (S2AL) to yield (R)-2,3-dihydroxy-isovalerate. In the isomerase reaction, S2AL is rearranged via a Mg-dependent methyl migration to produce 3-hydroxy-3-methyl-2-ketobutyrate (HMKB). In the reductase reaction, this 2-ketoacid undergoes a metal-dependent reduction by NADPH to yield (R)-2,3-dihydroxy-isovalerate. This is Ketol-acid reductoisomerase (NADP(+)) from Burkholderia lata (strain ATCC 17760 / DSM 23089 / LMG 22485 / NCIMB 9086 / R18194 / 383).